The sequence spans 388 residues: Probable ubiquitin-conjugating enzyme E2 L709 (388 aa).

The 160-residue stretch at N3–F162 folds into the UBC core domain. Residue C95 is the Glycyl thioester intermediate of the active site. The segment at V195 to K388 is disordered. Acidic residues-rich tracts occupy residues S221 to S238 and D246 to E297. Residues K310 to K388 are compositionally biased toward low complexity.

It belongs to the ubiquitin-conjugating enzyme family.

The enzyme catalyses S-ubiquitinyl-[E1 ubiquitin-activating enzyme]-L-cysteine + [E2 ubiquitin-conjugating enzyme]-L-cysteine = [E1 ubiquitin-activating enzyme]-L-cysteine + S-ubiquitinyl-[E2 ubiquitin-conjugating enzyme]-L-cysteine.. Its pathway is protein modification; protein ubiquitination. Functionally, catalyzes the covalent attachment of ubiquitin to other proteins. This chain is Probable ubiquitin-conjugating enzyme E2 L709, found in Acanthamoeba polyphaga (Amoeba).